Consider the following 498-residue polypeptide: ATP synthase subunit beta, chloroplastic (498 aa).

Residue 172–179 participates in ATP binding; sequence GGAGVGKT.

It belongs to the ATPase alpha/beta chains family. As to quaternary structure, F-type ATPases have 2 components, CF(1) - the catalytic core - and CF(0) - the membrane proton channel. CF(1) has five subunits: alpha(3), beta(3), gamma(1), delta(1), epsilon(1). CF(0) has four main subunits: a(1), b(1), b'(1) and c(9-12).

It localises to the plastid. The protein resides in the chloroplast thylakoid membrane. The catalysed reaction is ATP + H2O + 4 H(+)(in) = ADP + phosphate + 5 H(+)(out). Its function is as follows. Produces ATP from ADP in the presence of a proton gradient across the membrane. The catalytic sites are hosted primarily by the beta subunits. The sequence is that of ATP synthase subunit beta, chloroplastic from Elaeis oleifera (American oil palm).